The chain runs to 707 residues: Polyribonucleotide nucleotidyltransferase (707 aa).

Mg(2+) contacts are provided by Asp-488 and Asp-494. The KH domain maps to 554–613; the sequence is PRLFTMKINQDKIREVIGKGGETIRSITAETGTEINIAEDGTITIAATTQEAGDAAKKRI. The S1 motif domain occupies 623 to 693; the sequence is GKVYEGTVVK…DRGRVRLSIK (71 aa).

The protein belongs to the polyribonucleotide nucleotidyltransferase family. Requires Mg(2+) as cofactor.

Its subcellular location is the cytoplasm. The catalysed reaction is RNA(n+1) + phosphate = RNA(n) + a ribonucleoside 5'-diphosphate. Functionally, involved in mRNA degradation. Catalyzes the phosphorolysis of single-stranded polyribonucleotides processively in the 3'- to 5'-direction. The protein is Polyribonucleotide nucleotidyltransferase of Neisseria meningitidis serogroup B (strain ATCC BAA-335 / MC58).